The chain runs to 243 residues: Carboxy-S-adenosyl-L-methionine synthase (243 aa).

S-adenosyl-L-methionine contacts are provided by residues Tyr40, 65 to 67 (GSS), 90 to 91 (DN), 118 to 119 (DI), Asn133, and Arg200.

The protein belongs to the class I-like SAM-binding methyltransferase superfamily. Cx-SAM synthase family. Homodimer.

It carries out the reaction prephenate + S-adenosyl-L-methionine = carboxy-S-adenosyl-L-methionine + 3-phenylpyruvate + H2O. In terms of biological role, catalyzes the conversion of S-adenosyl-L-methionine (SAM) to carboxy-S-adenosyl-L-methionine (Cx-SAM). The polypeptide is Carboxy-S-adenosyl-L-methionine synthase (Shewanella denitrificans (strain OS217 / ATCC BAA-1090 / DSM 15013)).